The chain runs to 221 residues: Tetraspanin-2 (221 aa).

The Cytoplasmic segment spans residues 1–13 (MGRFRGGLRCIKY). A helical membrane pass occupies residues 14–34 (LLLGFNLLFWLAGSAVIAFGL). Residues 35-54 (WFRFGGTMKDLSSEDKSPEY) are Extracellular-facing. Residues 55–75 (FYVGLYVLVGAGALMMTVGFF) form a helical membrane-spanning segment. At 76–90 (GCCGAMRESQCVLGS) the chain is on the cytoplasmic side. Residues 91-111 (FFTCLLVIFAAEVTTGVFAFI) form a helical membrane-spanning segment. At 112–188 (GKDVAIRHVQ…ETVISAKLQL (77 aa)) the chain is on the extracellular side. Asn139 is a glycosylation site (N-linked (GlcNAc...) asparagine). Residues 189-209 (IGIVGIGIAGLTIFGMIFSMV) form a helical membrane-spanning segment. At 210-221 (LCCAIRNSRDVI) the chain is on the cytoplasmic side.

Belongs to the tetraspanin (TM4SF) family.

Its subcellular location is the membrane. Functionally, may play a role in signalling in oligodendrocytes in the early stages of their terminal differentiation into myelin-forming glia and may also function in stabilizing the mature sheath. This Mus musculus (Mouse) protein is Tetraspanin-2 (Tspan2).